Reading from the N-terminus, the 343-residue chain is Heat-inducible transcription repressor HrcA (343 aa).

This sequence belongs to the HrcA family.

In terms of biological role, negative regulator of class I heat shock genes (grpE-dnaK-dnaJ and groELS operons). Prevents heat-shock induction of these operons. The chain is Heat-inducible transcription repressor HrcA from Bacillus cytotoxicus (strain DSM 22905 / CIP 110041 / 391-98 / NVH 391-98).